We begin with the raw amino-acid sequence, 90 residues long: Protein A54 (90 aa).

The sequence is that of Protein A54 from Homo sapiens (Human).